A 140-amino-acid chain; its full sequence is Thymic stromal lymphopoietin (140 aa).

The N-terminal stretch at 1 to 19 is a signal peptide; that stretch reads MVLLRSLFILQVLVRMGLT. 2 N-linked (GlcNAc...) asparagine glycosylation sites follow: asparagine 21 and asparagine 26. Intrachain disulfides connect cysteine 25-cysteine 98, cysteine 57-cysteine 63, and cysteine 78-cysteine 121. Asparagine 123 carries an N-linked (GlcNAc...) asparagine glycan.

In terms of assembly, interacts with a receptor composed of CRLF2 and IL7R. Binding of TSLP to CRLF2/TSLPR is a mechanistic prerequisite for recruitment of IL7R to the high-affinity ternary complex.

Its subcellular location is the secreted. Functionally, cytokine that induces the release of T-cell-attracting chemokines from monocytes and, in particular, enhances the maturation of CD11c(+) dendritic cells. Can induce allergic inflammation by directly activating mast cells. The polypeptide is Thymic stromal lymphopoietin (Tslp) (Mus musculus (Mouse)).